The primary structure comprises 244 residues: 5'-nucleotidase SurE 2 (244 aa).

Positions 8, 9, 39, and 96 each coordinate a divalent metal cation.

Belongs to the SurE nucleotidase family. Requires a divalent metal cation as cofactor.

It is found in the cytoplasm. It carries out the reaction a ribonucleoside 5'-phosphate + H2O = a ribonucleoside + phosphate. Functionally, nucleotidase that shows phosphatase activity on nucleoside 5'-monophosphates. This chain is 5'-nucleotidase SurE 2, found in Thermus thermophilus (strain ATCC BAA-163 / DSM 7039 / HB27).